The sequence spans 278 residues: Sulfur carrier protein FdhD (278 aa).

Cys113 serves as the catalytic Cysteine persulfide intermediate. 251 to 256 provides a ligand contact to Mo-bis(molybdopterin guanine dinucleotide); it reads FCRNGR.

Belongs to the FdhD family.

The protein localises to the cytoplasm. Required for formate dehydrogenase (FDH) activity. Acts as a sulfur carrier protein that transfers sulfur from IscS to the molybdenum cofactor prior to its insertion into FDH. This is Sulfur carrier protein FdhD from Shewanella oneidensis (strain ATCC 700550 / JCM 31522 / CIP 106686 / LMG 19005 / NCIMB 14063 / MR-1).